We begin with the raw amino-acid sequence, 1806 residues long: Collagen alpha-1(XI) chain (1806 aa).

The signal sequence occupies residues 1–35 (MEPWSSRWKTKRWLWDFTVTTLALTFLFQAREVRG). A propeptide spans 36–511 (AAPVDVLKAL…DGSKGPTISA (476 aa)) (N-terminal propeptide). 2 disulfides stabilise this stretch: cysteine 61-cysteine 243 and cysteine 182-cysteine 236. The 173-residue stretch at 71–243 (DTAYRVSKQA…DYCEHYSPDC (173 aa)) folds into the Laminin G-like domain. The tract at residues 230–419 (KAAYDYCEHY…DITETSINGH (190 aa)) is nonhelical region. The triple-helical region (interrupted) stretch occupies residues 420–508 (GAYGEKGQKG…YGGDGSKGPT (89 aa)). Residues 439–508 (LVEGPPGPAG…YGGDGSKGPT (70 aa)) form a disordered region. A Collagen-like 1 domain is found at 442 to 490 (GPPGPAGPAGIMGPPGLQGPTGPPGDPGDRGPPGRPGLPGADGLPGPPG). 2 stretches are compositionally biased toward low complexity: residues 449 to 461 (PAGI…LQGP) and 479 to 496 (LPGA…LMLP). Residues 509–511 (ISA) are short nonhelical segment. Residues 512–528 (QEAQAQAILQQARIALR) form a telopeptide region. Positions 528 to 1563 (RGPPGPMGLT…TRRHTEGMQA (1036 aa)) are disordered. Positions 529–1542 (GPPGPMGLTG…PGSPGPPGEV (1014 aa)) are triple-helical region. Collagen-like domains follow at residues 532–586 (GPMG…GADG), 583–641 (GADG…EIGP), 616–674 (GERG…VDGP), and 643–699 (GLPG…PGPQ). 2 stretches are compositionally biased toward gly residues: residues 541–550 (GPVGGPGSSG) and 583–592 (GADGGRGMPG). At lysine 612 the chain carries Allysine. The segment covering 641–662 (PRGLPGEAGPRGLLGPRGTPGA) has biased composition (low complexity). The span at 699 to 710 (QGLPGPQGPIGP) shows a compositional bias: pro residues. Low complexity predominate over residues 717-728 (QGKPGLAGLPGA). Over residues 807 to 816 (RGEDGPEGPK) the composition is skewed to basic and acidic residues. Composition is skewed to low complexity over residues 875–903 (KPGP…PGPK), 918–927 (RGPQGPQGPV), 941–960 (KDGL…QGKT), 971–981 (PQGPTGETGPI), 1032–1041 (RGLPGAQGAP), and 1058–1074 (SPGE…IGLP). A compositionally biased stretch (pro residues) spans 1076–1085 (RPGPQGPPGP). Residues 1086–1110 (AGEKGAPGEKGPQGPAGRDGVQGPV) are compositionally biased toward low complexity. Gly residues predominate over residues 1162–1171 (GIAGGDGEPG). Composition is skewed to pro residues over residues 1218-1229 (MGPPGPPGPRGP) and 1343-1362 (QPGP…PGKR). Low complexity-rich tracts occupy residues 1385-1394 (AEGPPGKTGP) and 1419-1428 (QGLPGAAGQD). Collagen-like domains lie at 1393–1450 (GPVG…GSKG), 1429–1487 (GPPG…AKGD), and 1483–1541 (GAKG…PPGE). A compositionally biased stretch (pro residues) spans 1430–1439 (PPGPMGPPGL). Lysine 1452 is subject to Allysine. The span at 1455–1464 (PGLIGLIGPP) shows a compositional bias: low complexity. The span at 1483–1492 (GAKGDGGIPG) shows a compositional bias: gly residues. Pro residues-rich tracts occupy residues 1493-1509 (PAGP…PGPQ) and 1530-1539 (PGPPGSPGPP). Residues 1543-1563 (IQPLPILSSKKTRRHTEGMQA) form a nonhelical region (C-terminal) region. A propeptide spans 1564–1806 (DADDNILDYS…FEVGPVCFLG (243 aa)) (C-terminal propeptide). The region spanning 1577–1805 (EEIFGSLNSL…GFEVGPVCFL (229 aa)) is the Fibrillar collagen NC1 domain. Cysteines 1607 and 1639 form a disulfide. The Ca(2+) site is built by aspartate 1625, asparagine 1627, glutamine 1628, cysteine 1630, and aspartate 1633. N-linked (GlcNAc...) asparagine glycosylation occurs at asparagine 1640. Cystine bridges form between cysteine 1648/cysteine 1803 and cysteine 1714/cysteine 1757.

It belongs to the fibrillar collagen family. Trimers composed of three different chains: alpha 1(XI), alpha 2(XI), and alpha 3(XI). Alpha 3(XI) is a post-translational modification of alpha 1(II). Alpha 1(V) can also be found instead of alpha 3(XI)=1(II). In terms of processing, prolines at the third position of the tripeptide repeating unit (G-X-Y) are hydroxylated in some or all of the chains. N-glycosylated. As to expression, cartilage, placenta and some tumor or virally transformed cell lines. Isoforms using exon IIA or IIB are found in the cartilage while isoforms using only exon IIB are found in the tendon.

It is found in the secreted. The protein localises to the extracellular space. The protein resides in the extracellular matrix. In terms of biological role, may play an important role in fibrillogenesis by controlling lateral growth of collagen II fibrils. The polypeptide is Collagen alpha-1(XI) chain (COL11A1) (Homo sapiens (Human)).